Consider the following 187-residue polypeptide: Elongation factor P (187 aa).

The protein belongs to the elongation factor P family.

The protein resides in the cytoplasm. It participates in protein biosynthesis; polypeptide chain elongation. In terms of biological role, involved in peptide bond synthesis. Stimulates efficient translation and peptide-bond synthesis on native or reconstituted 70S ribosomes in vitro. Probably functions indirectly by altering the affinity of the ribosome for aminoacyl-tRNA, thus increasing their reactivity as acceptors for peptidyl transferase. The polypeptide is Elongation factor P (Wolinella succinogenes (strain ATCC 29543 / DSM 1740 / CCUG 13145 / JCM 31913 / LMG 7466 / NCTC 11488 / FDC 602W) (Vibrio succinogenes)).